Consider the following 520-residue polypeptide: RING-type E3 ubiquitin-protein ligase PPIL2 (520 aa).

Residues Arg35–Thr108 enclose the U-box domain. Residues Leu197–Gly217 are a coiled coil. Lys216 is covalently cross-linked (Glycyl lysine isopeptide (Lys-Gly) (interchain with G-Cter in SUMO2)). One can recognise a PPIase cyclophilin-type domain in the interval Lys278–Val433. The segment at Ala456–Trp520 is disordered. Low complexity predominate over residues Ser463–Gln474. Ser470 carries the phosphoserine modification. Lys482 carries the post-translational modification N6-acetyllysine.

This sequence belongs to the cyclophilin-type PPIase family. PPIL2 subfamily. As to quaternary structure, component of the minor spliceosome, which splices U12-type introns. Within this complex, interacts with PRPF8/PRP8, EFTUD2/SNU114 and PLRG1. Interacts with isoform 2 of BSG. Interacts (via the PPIase cyclophilin-type domain) with CRNKL1; they may form a trimeric complex with HSP90. In terms of tissue distribution, highest expression in thymus, pancreas and testis. Also detected in heart, placenta, lung, liver, skeletal muscle, kidney, spleen, prostate, ovary, small intestine and colon. Poorly detected in brain and leukocytes. Strong protein expression in lymph node (cortical, paracortical and medullar regions), thyroid (follicular epithelial cells), testis (developing spermatozoa), stomach (cells lining the gastric pit), pancreas, kidney (proximal and distal-tubule cells and collecting duct cells but not in glomeruli), endometrium and colon (goblet cells). Moderate protein expression in spleen, prostate (epithelium and squamous cell carcinomas), placenta and adrenal gland. Weak protein expression in liver, heart, breast, ovary, and lung. No protein expression in brain and bladder. High protein expression in most lymphomas and melanomas.

It is found in the nucleus. It carries out the reaction S-ubiquitinyl-[E2 ubiquitin-conjugating enzyme]-L-cysteine + [acceptor protein]-L-lysine = [E2 ubiquitin-conjugating enzyme]-L-cysteine + N(6)-ubiquitinyl-[acceptor protein]-L-lysine.. The protein operates within protein modification; protein ubiquitination. Its function is as follows. Has a ubiquitin-protein ligase activity acting as an E3 ubiquitin protein ligase or as an ubiquitin-ubiquitin ligase promoting elongation of ubiquitin chains on substrates. By mediating 'Lys-48'-linked polyubiquitination of proteins could target them for proteasomal degradation. May also function as a chaperone, playing a role in transport to the cell membrane of BSG/Basigin for instance. Probable inactive PPIase with no peptidyl-prolyl cis-trans isomerase activity. As a component of the minor spliceosome, involved in the splicing of U12-type introns in pre-mRNAs. This Homo sapiens (Human) protein is RING-type E3 ubiquitin-protein ligase PPIL2.